Consider the following 221-residue polypeptide: Endonuclease V (221 aa).

Mg(2+) contacts are provided by D43 and D111.

This sequence belongs to the endonuclease V family. Requires Mg(2+) as cofactor.

Its subcellular location is the cytoplasm. The catalysed reaction is Endonucleolytic cleavage at apurinic or apyrimidinic sites to products with a 5'-phosphate.. Its function is as follows. DNA repair enzyme involved in the repair of deaminated bases. Selectively cleaves double-stranded DNA at the second phosphodiester bond 3' to a deoxyinosine leaving behind the intact lesion on the nicked DNA. This Azotobacter vinelandii (strain DJ / ATCC BAA-1303) protein is Endonuclease V.